We begin with the raw amino-acid sequence, 318 residues long: Beta-sarcoglycan (318 aa).

The disordered stretch occupies residues 1-32 (MAAAAAAAAEQQSSNGPVKKSMREKAVERRSV). Residues 1-65 (MAAAAAAAAE…GLRGRKGNLA (65 aa)) are Cytoplasmic-facing. Basic and acidic residues predominate over residues 21-32 (SMREKAVERRSV). A helical; Signal-anchor for type II membrane protein membrane pass occupies residues 66 to 86 (ICVIILLFILAVINLIITLVI). Topologically, residues 87 to 318 (WAVIRIGPNG…ISDNPCGNTH (232 aa)) are extracellular. Residues Asn-158, Asn-211, and Asn-258 are each glycosylated (N-linked (GlcNAc...) asparagine). 2 disulfides stabilise this stretch: Cys-288-Cys-314 and Cys-290-Cys-307.

This sequence belongs to the sarcoglycan beta/delta/gamma/zeta family. Cross-link to form 2 major subcomplexes: one consisting of SGCB, SGCD and SGCG and the other consisting of SGCB and SGCD. The association between SGCB and SGCG is particularly strong while SGCA is loosely associated with the other sarcoglycans. Post-translationally, disulfide bonds are present. As to expression, highest expression in heart and skeletal muscle. Low expression in brain, kidney, placenta, pancreas and lung. High expression in fetal brain. Also found in fetal lung, kidney and liver.

The protein localises to the cell membrane. It is found in the sarcolemma. It localises to the cytoplasm. The protein resides in the cytoskeleton. Component of the sarcoglycan complex, a subcomplex of the dystrophin-glycoprotein complex which forms a link between the F-actin cytoskeleton and the extracellular matrix. This is Beta-sarcoglycan (SGCB) from Homo sapiens (Human).